The chain runs to 275 residues: Undecaprenyl-diphosphatase 2 (275 aa).

The next 7 helical transmembrane spans lie at 48 to 68 (NAYV…ALLF), 90 to 110 (GLTL…GLLF), 117 to 137 (IFHV…MIAA), 154 to 174 (ISYK…WPGF), 195 to 215 (ANFT…LSLI), 223 to 243 (ISLL…SLVV), and 254 to 274 (IKLV…LFLF).

This sequence belongs to the UppP family.

It localises to the cell membrane. The catalysed reaction is di-trans,octa-cis-undecaprenyl diphosphate + H2O = di-trans,octa-cis-undecaprenyl phosphate + phosphate + H(+). In terms of biological role, catalyzes the dephosphorylation of undecaprenyl diphosphate (UPP). Confers resistance to bacitracin. In Shouchella clausii (strain KSM-K16) (Alkalihalobacillus clausii), this protein is Undecaprenyl-diphosphatase 2.